The sequence spans 227 residues: Ribonuclease 3 (227 aa).

One can recognise an RNase III domain in the interval 4–126 (LDRLERKIGY…IIGAMSLDQG (123 aa)). Glutamate 39 is a binding site for Mg(2+). Aspartate 43 is a catalytic residue. Aspartate 112 and glutamate 115 together coordinate Mg(2+). Glutamate 115 is an active-site residue. The DRBM domain maps to 153 to 226 (DAKTRLQEYL…AEQILKELDI (74 aa)).

It belongs to the ribonuclease III family. As to quaternary structure, homodimer. Requires Mg(2+) as cofactor.

The protein localises to the cytoplasm. The catalysed reaction is Endonucleolytic cleavage to 5'-phosphomonoester.. Digests double-stranded RNA. Involved in the processing of primary rRNA transcript to yield the immediate precursors to the large and small rRNAs (23S and 16S). Processes some mRNAs, and tRNAs when they are encoded in the rRNA operon. Processes pre-crRNA and tracrRNA of type II CRISPR loci if present in the organism. The chain is Ribonuclease 3 from Haemophilus influenzae (strain ATCC 51907 / DSM 11121 / KW20 / Rd).